A 700-amino-acid polypeptide reads, in one-letter code: MERKELSYTIQSWSSYSGAFHPINILIDNPHQANSRWSCNTSICKPNNSEEQYVILKLDKLALVTDITFGKFHTPHLCNLKDFIVYGGREQHLMFPLLRAGLTNDSNRETFPLCIKKYNKIENSIACKYIKIVPLQAHAHEFNMSIWYVALHGIDSASALSCTEKNRALHLEKKALNCLLSYFAFKGKLDICSVILQSYQLSIPHSPLMRMYDAFCRLGDTQKTILLFQQELQAEIIEKWPKHKLTKLRSHRIATFLKGISRRSGHQMVYNPKDNCIYLYGGWDGVKTFSDFWIYNVDKDLWIMENEYGIPGERVCHRMVIDTSQQKLYLLGNYFGSSRETEVPPDARTDFWEFDISKKVWTCLSYDTSKDGGPAAIFDHGMSVDEKRGIVYVSGGCKWDPDELVFEGLYAYDTKNRIWEQLAVRYEDRQKHCEFKIERMGHCMEYFPDENKLYIFGGQSYDQEFILDMCYIKLETREAVQHVRKNDTSQSPSPSFCQRSIMDSKNHRIFTMFGFEQRNIHKVLRPSLWIFYITTEEWVKISDINEEEGNEHPCSRFGHAVAADLNRNIIYLMGGNASTHPLRPMKLSDFWKLDILDRWGIKHCLSNVSLQLHLHRFHELVSENLAKAVEYLQKSMQPQFDKSPLFWNALILDAFSGTHKNKDIAQRRFETFQTIYDLLPVDENTVAPNESLLNMIEFFT.

Kelch repeat units lie at residues 276–322, 327–381, 390–439, 452–499, 508–558, and 569–619; these read CIYL…MVID, KLYL…FDHG, IVYV…KIER, KLYI…FCQR, RIFT…SRFG, and IIYL…RFHE.

The polypeptide is Mei4-dependent protein 6 (mde6) (Schizosaccharomyces pombe (strain 972 / ATCC 24843) (Fission yeast)).